The sequence spans 417 residues: Envelope glycoprotein D (417 aa).

A signal peptide spans 1 to 18; that stretch reads MQGPTLAVLGALLAVAVS. Topologically, residues 19–360 are virion surface; that stretch reads LPTPAPRVTV…APATPAAPDA (342 aa). Asn41 and Asn102 each carry an N-linked (GlcNAc...) asparagine; by host glycan. Intrachain disulfides connect Cys75–Cys197, Cys114–Cys213, and Cys126–Cys135. The segment at 259–356 is disordered; sequence EESKGYEPPP…HPPPAPATPA (98 aa). The span at 279–292 shows a compositional bias: acidic residues; it reads GDDEAREDEGETED. A helical transmembrane segment spans residues 361–389; that stretch reads VPVSVGIGIAAAAIACVAAAAAGAYFVYT. The Intravirion segment spans residues 390 to 417; it reads RRRGAGPLPRKPKKLPAFGNVNYSALPG.

This sequence belongs to the herpesviridae glycoprotein D family.

It is found in the virion membrane. In terms of biological role, envelope glycoprotein that binds to host cell entry receptors, promoting the virus entry into host cells. May trigger fusion with host membrane, by recruiting the fusion machinery composed of gB and gH/gL. The polypeptide is Envelope glycoprotein D (gD) (Bovine herpesvirus 1.1 (strain Cooper) (BoHV-1)).